The following is a 396-amino-acid chain: Adenosine deaminase 1 (396 aa).

The interval 1–26 (MTSRSTEKSAAANPAAVSKTPSPDRI) is disordered. Residues His35 and His37 each coordinate Zn(2+). Substrate-binding residues include His37, Asp39, and Gly197. His224 provides a ligand contact to Zn(2+). Residue Glu227 is the Proton donor of the active site. Residue Asp316 participates in Zn(2+) binding.

The protein belongs to the metallo-dependent hydrolases superfamily. Adenosine and AMP deaminases family. Adenosine deaminase subfamily. In terms of assembly, homotetramer. The cofactor is Zn(2+).

It catalyses the reaction adenosine + H2O + H(+) = inosine + NH4(+). The catalysed reaction is 2'-deoxyadenosine + H2O + H(+) = 2'-deoxyinosine + NH4(+). With respect to regulation, coformycin and 2'-deoxycoformycin, whose structures mimic the transition state of the deamination reaction, are potent competitive inhibitors. Functionally, catalyzes the hydrolytic deamination of adenosine and 2-deoxyadenosine. This chain is Adenosine deaminase 1, found in Streptomyces coelicolor (strain ATCC BAA-471 / A3(2) / M145).